We begin with the raw amino-acid sequence, 456 residues long: Adenylosuccinate lyase (456 aa).

Residues 15-16 (RY), 90-92 (NHD), and 122-123 (TS) each bind N(6)-(1,2-dicarboxyethyl)-AMP. Residue H171 is the Proton donor/acceptor of the active site. Q248 is a binding site for N(6)-(1,2-dicarboxyethyl)-AMP. S296 serves as the catalytic Proton donor/acceptor. N(6)-(1,2-dicarboxyethyl)-AMP contacts are provided by residues S297, 302-304 (KVN), N310, R336, and 341-345 (STVLR).

Belongs to the lyase 1 family. Adenylosuccinate lyase subfamily. As to quaternary structure, homotetramer.

It catalyses the reaction N(6)-(1,2-dicarboxyethyl)-AMP = fumarate + AMP. It carries out the reaction (2S)-2-[5-amino-1-(5-phospho-beta-D-ribosyl)imidazole-4-carboxamido]succinate = 5-amino-1-(5-phospho-beta-D-ribosyl)imidazole-4-carboxamide + fumarate. The catalysed reaction is (2S)-2-amino-2'-deoxyadenylo-succinate = dZMP + fumarate. It participates in purine metabolism; AMP biosynthesis via de novo pathway; AMP from IMP: step 2/2. It functions in the pathway purine metabolism; IMP biosynthesis via de novo pathway; 5-amino-1-(5-phospho-D-ribosyl)imidazole-4-carboxamide from 5-amino-1-(5-phospho-D-ribosyl)imidazole-4-carboxylate: step 2/2. The protein operates within purine metabolism. Its function is as follows. Catalyzes two reactions in de novo purine nucleotide biosynthesis. Catalyzes the breakdown of 5-aminoimidazole- (N-succinylocarboxamide) ribotide (SAICAR or 2-[5-amino-1-(5-phospho-beta-D-ribosyl)imidazole-4-carboxamido]succinate) to 5-aminoimidazole-4-carboxamide ribotide (AICAR or 5-amino-1-(5-phospho-beta-D-ribosyl)imidazole-4-carboxamide) and fumarate, and of adenylosuccinate (ADS or N(6)-(1,2-dicarboxyethyl)-AMP) to adenosine monophosphate (AMP) and fumarate. In terms of biological role, (Microbial infection) Catalyzes the conversion of 2-amino-2'-deoxyadenylo-succinate to dZMP and fumarate, when the bacterium is infected by a phage that produces the substrate of this reaction, a step in the synthesis of dZTP (2-amino-2'-deoxyadenosine 5'-triphosphate), which is a nucleotide then used by the phage as a DNA polymerase substrate. This is Adenylosuccinate lyase from Vibrio cholerae serotype O1 (strain ATCC 39541 / Classical Ogawa 395 / O395).